The sequence spans 182 residues: Transmembrane and coiled-coil domain-containing protein 2 (182 aa).

Transmembrane regions (helical) follow at residues 10–30 (IIID…TLLG) and 50–70 (VQVI…YALW). The stretch at 122–149 (GLQEKILKKLQTVENKVKDLEGMIISQK) forms a coiled coil.

Its subcellular location is the membrane. In Bos taurus (Bovine), this protein is Transmembrane and coiled-coil domain-containing protein 2 (TMCO2).